Reading from the N-terminus, the 71-residue chain is Translation initiation factor IF-1 (71 aa).

The region spanning 1–71 (MAKQAAIEQD…LTKARITYRY (71 aa)) is the S1-like domain.

The protein belongs to the IF-1 family. In terms of assembly, component of the 30S ribosomal translation pre-initiation complex which assembles on the 30S ribosome in the order IF-2 and IF-3, IF-1 and N-formylmethionyl-tRNA(fMet); mRNA recruitment can occur at any time during PIC assembly.

The protein resides in the cytoplasm. In terms of biological role, one of the essential components for the initiation of protein synthesis. Stabilizes the binding of IF-2 and IF-3 on the 30S subunit to which N-formylmethionyl-tRNA(fMet) subsequently binds. Helps modulate mRNA selection, yielding the 30S pre-initiation complex (PIC). Upon addition of the 50S ribosomal subunit IF-1, IF-2 and IF-3 are released leaving the mature 70S translation initiation complex. The sequence is that of Translation initiation factor IF-1 from Christiangramia forsetii (strain DSM 17595 / CGMCC 1.15422 / KT0803) (Gramella forsetii).